A 732-amino-acid polypeptide reads, in one-letter code: Catalase-peroxidase (732 aa).

The segment at residues 97–220 (WHSAGTYRTS…LAAVQMGLIY (124 aa)) is a cross-link (tryptophyl-tyrosyl-methioninium (Trp-Tyr) (with M-246)). Catalysis depends on H98, which acts as the Proton acceptor. Residues 220-246 (YVNPEGPDGNPDPVAAGRDIRETFARM) constitute a cross-link (tryptophyl-tyrosyl-methioninium (Tyr-Met) (with W-97)). H261 contacts heme b.

This sequence belongs to the peroxidase family. Peroxidase/catalase subfamily. In terms of assembly, homodimer or homotetramer. The cofactor is heme b. In terms of processing, formation of the three residue Trp-Tyr-Met cross-link is important for the catalase, but not the peroxidase activity of the enzyme.

The enzyme catalyses H2O2 + AH2 = A + 2 H2O. It carries out the reaction 2 H2O2 = O2 + 2 H2O. Bifunctional enzyme with both catalase and broad-spectrum peroxidase activity. This chain is Catalase-peroxidase, found in Pelodictyon phaeoclathratiforme (strain DSM 5477 / BU-1).